A 531-amino-acid polypeptide reads, in one-letter code: T-complex protein 1 subunit zeta-2 (531 aa).

The protein belongs to the TCP-1 chaperonin family. As to quaternary structure, component of the chaperonin-containing T-complex (TRiC), a heterooligomeric complex of about 850 to 900 kDa that forms two stacked rings, 12 to 16 nm in diameter. As to expression, testis specific.

Its subcellular location is the cytoplasm. Component of the chaperonin-containing T-complex (TRiC), a molecular chaperone complex that assists the folding of proteins upon ATP hydrolysis. The chain is T-complex protein 1 subunit zeta-2 (Cct6b) from Mus musculus (Mouse).